We begin with the raw amino-acid sequence, 148 residues long: Calmodulin-related protein 97A (148 aa).

EF-hand domains follow at residues 7 to 42, 43 to 78, 80 to 115, and 116 to 148; these read EQIAEFKDAFVQFDKEGTGKIATRELGTLMRTLGQN, PTEAELQDLIAEAENNNNGQLNFTEFCGIMAKQMRE, DTEEEMREAFKIFDRDGDGFISPAELRFVMINLGEK, and VTDEEIDEMIREADFDGDGMINYEEFVWMISQK. Ca(2+) is bound by residues Asp20, Thr24, Lys26, Glu31, Asn58, Asn60, Gln62, Glu67, Asp93, Asp95, Asp97, Glu104, Asp129, Asp131, Asp133, Met135, and Glu140.

Belongs to the calmodulin family.

May be involved in calcium-mediated signal transduction. This is Calmodulin-related protein 97A (Acam) from Drosophila melanogaster (Fruit fly).